A 224-amino-acid chain; its full sequence is MRIVITIGGSIIISEFSHEMFRAYADILNSLRDEHDLFVVVGGGRPARDYIGVARELGASEARCDDIGIDVTRLNARLLITALGDSAYPGVPENFREALEVAATGRIVVMGGTEPAHSTDAVGAILAETVEADLMINLTSVDGFYDRDPAKYPDARFYPEITASEMLEHLRGSDVRAGTYEFFDHTALHMIRRSGIRTMIVNGNDPENLLRALDGEIGTTVIPE.

Residue 9–10 (GS) participates in ATP binding. G43 lines the UMP pocket. ATP contacts are provided by G44 and R48. Residues D65 and 113 to 119 (TEPAHST) each bind UMP. T139, Y145, and D148 together coordinate ATP.

The protein belongs to the UMP kinase family. Homohexamer.

Its subcellular location is the cytoplasm. The catalysed reaction is UMP + ATP = UDP + ADP. Its pathway is pyrimidine metabolism; CTP biosynthesis via de novo pathway; UDP from UMP (UMPK route): step 1/1. With respect to regulation, inhibited by UTP. Catalyzes the reversible phosphorylation of UMP to UDP. This is Uridylate kinase from Methanothermobacter thermautotrophicus (strain ATCC 29096 / DSM 1053 / JCM 10044 / NBRC 100330 / Delta H) (Methanobacterium thermoautotrophicum).